A 225-amino-acid chain; its full sequence is 2-C-methyl-D-erythritol 4-phosphate cytidylyltransferase (225 aa).

It belongs to the IspD/TarI cytidylyltransferase family. IspD subfamily.

It carries out the reaction 2-C-methyl-D-erythritol 4-phosphate + CTP + H(+) = 4-CDP-2-C-methyl-D-erythritol + diphosphate. The protein operates within isoprenoid biosynthesis; isopentenyl diphosphate biosynthesis via DXP pathway; isopentenyl diphosphate from 1-deoxy-D-xylulose 5-phosphate: step 2/6. Catalyzes the formation of 4-diphosphocytidyl-2-C-methyl-D-erythritol from CTP and 2-C-methyl-D-erythritol 4-phosphate (MEP). This Haemophilus influenzae (strain 86-028NP) protein is 2-C-methyl-D-erythritol 4-phosphate cytidylyltransferase.